Reading from the N-terminus, the 1122-residue chain is Adhesin P1 (1122 aa).

Positions 1–30 are cleaved as a signal peptide; that stretch reads MKKLIFKLSVGITPLALIGLGSFGLAVSGA. 3 disordered regions span residues 183–209, 244–273, and 544–563; these read AGDTSAEGSATPAGGGSGSSAAGGGAV, DYNSDQNKIPKPKTLLDSSESSESINGGRT, and QNSGSQQSTSTPMPNSNGNE. Positions 195 to 208 are enriched in gly residues; the sequence is AGGGSGSSAAGGGA. Residues 259-273 show a composition bias toward polar residues; sequence LDSSESSESINGGRT. Residues 997 to 1021 traverse the membrane as a helical segment; sequence VLPVAISIPIIIIALALALGLGIGI. Positions 1066-1122 are disordered; that stretch reads KTPQMLQANKKDGASSPSKPSAPAAKKPTGPTKPSAPGAKPTAPAKPKAPAPTKKIE. Over residues 1079-1122 the composition is skewed to low complexity; the sequence is ASSPSKPSAPAAKKPTGPTKPSAPGAKPTAPAKPKAPAPTKKIE.

This sequence belongs to the adhesin P1 family.

It is found in the cell membrane. Its function is as follows. Could be involved in cytadherence. The sequence is that of Adhesin P1 (gapA) from Mycoplasmoides gallisepticum (Mycoplasma gallisepticum).